The chain runs to 596 residues: MSSKKEYVVGIDLGTTNSVIAWMKPDSSVEVIPNAEGARTTPSIVAFSKSGEILVGEPAKRQLILNSDRTIKSIKRKMGTDYKVKIDDKEYSPQEISAFILKKLKKDAEEYLGGEIKRAVITCPAYFNDAQRQATKEAGIIAGFDVLRIINEPTAAALAYGLDRKGKEEKVLVYDLGGGTFDVSILEIGDGVIQVIATSGNNHLGGDDFDQRIIDWLAEEFKKQHGVDLKEDKQALQRLRDAAEKAKIELSSKLETDISLPYITATAEGPLHLEMRLTRSMFESLTRDLVEMTRKPIEQALSDAKLKPEDIDEIILVGGMTRVPMIQNFIKEIFGKEPNKRVNPDEAVAMGAAIQAAILAGEEGAQGKDIVLVDVTPLTLGIEVKGGLFEPIIPRNSTIPIKKSKVFTTAEDGQTEVEIRVFQGERPIAADNILLGSFRLVGIPPAPRGVPQIEVTFDIDSDGIVHVSAKDLGTGKEQTMVVSGRHKLSEEDINKIIEDAKKYEEQDKRRKEEVELKNKADDLAYYIDKSLKEYGDKIPQDEKQKLETLVNDLRDAINKNDIARIKMLFDELEREKTKIGEYIYKQNQGNQQAENQ.

Phosphothreonine; by autocatalysis is present on threonine 180.

Belongs to the heat shock protein 70 family.

Functionally, acts as a chaperone. This chain is Chaperone protein DnaK, found in Thermosipho melanesiensis (strain DSM 12029 / CIP 104789 / BI429).